The primary structure comprises 606 residues: Glutamine--fructose-6-phosphate aminotransferase [isomerizing] (606 aa).

The Nucleophile; for GATase activity role is filled by C2. A Glutamine amidotransferase type-2 domain is found at 2–217 (CGIIGIVGKE…EGDYVALDHD (216 aa)). 2 consecutive SIS domains span residues 280–421 (VPGD…ARGT) and 454–596 (IAAD…VDQP). The active-site For Fru-6P isomerization activity is K601.

In terms of assembly, homodimer.

Its subcellular location is the cytoplasm. It carries out the reaction D-fructose 6-phosphate + L-glutamine = D-glucosamine 6-phosphate + L-glutamate. Catalyzes the first step in hexosamine metabolism, converting fructose-6P into glucosamine-6P using glutamine as a nitrogen source. The chain is Glutamine--fructose-6-phosphate aminotransferase [isomerizing] from Caulobacter vibrioides (strain ATCC 19089 / CIP 103742 / CB 15) (Caulobacter crescentus).